We begin with the raw amino-acid sequence, 274 residues long: Mitochondrial outer membrane protein porin 4 (274 aa).

Glycine 2 is subject to N-acetylglycine. Position 76 is a phosphoserine (serine 76).

This sequence belongs to the eukaryotic mitochondrial porin (TC 1.B.8.1) family. As to expression, widely expressed.

It localises to the cell membrane. The protein localises to the mitochondrion outer membrane. Functionally, forms a channel through the mitochondrial outer membrane that allows diffusion of small hydrophilic molecules. The channel adopts an open conformation at low or zero membrane potential and a closed conformation at potentials above 30-40 mV. The open state has a weak anion selectivity whereas the closed state is cation-selective. Involved in plant growth and development at the vegetative and reproductive stages. Is important for leaf and pollen development and mitochondrial membrane potential steady state. May be involved in disease resistance. The protein is Mitochondrial outer membrane protein porin 4 (VDAC4) of Arabidopsis thaliana (Mouse-ear cress).